We begin with the raw amino-acid sequence, 262 residues long: Intron-encoded DNA endonuclease ai2b (262 aa).

This sequence belongs to the LAGLIDADG endonuclease family.

The protein localises to the mitochondrion. Mitochondrial DNA endonuclease involved in intron homing. This chain is Intron-encoded DNA endonuclease ai2b (ai2b), found in Dictyostelium discoideum (Social amoeba).